The following is a 635-amino-acid chain: Phosphatidylserine decarboxylase proenzyme 2 (635 aa).

Positions 20 to 146 (KLQKFRIHRR…VVQEPESTCK (127 aa)) constitute a C2 domain. 2 consecutive EF-hand domains span residues 174-209 (TERR…FGNL) and 210-245 (VAAN…QQEQ). Ca(2+) contacts are provided by D187, N189, D191, Q193, E198, D223, N225, D227, and E234. Catalysis depends on charge relay system; for autoendoproteolytic cleavage activity residues D443, H499, and S587. Catalysis depends on S587, which acts as the Schiff-base intermediate with substrate; via pyruvic acid; for decarboxylase activity. S587 carries the pyruvic acid (Ser); by autocatalysis modification.

The protein belongs to the phosphatidylserine decarboxylase family. PSD-B subfamily. Eukaryotic type II sub-subfamily. As to quaternary structure, heterodimer of a large membrane-associated beta subunit and a small pyruvoyl-containing alpha subunit. Pyruvate is required as a cofactor. Is synthesized initially as an inactive proenzyme. Formation of the active enzyme involves a self-maturation process in which the active site pyruvoyl group is generated from an internal serine residue via an autocatalytic post-translational modification. Two non-identical subunits are generated from the proenzyme in this reaction, and the pyruvate is formed at the N-terminus of the alpha chain, which is derived from the carboxyl end of the proenzyme. The autoendoproteolytic cleavage occurs by a canonical serine protease mechanism, in which the side chain hydroxyl group of the serine supplies its oxygen atom to form the C-terminus of the beta chain, while the remainder of the serine residue undergoes an oxidative deamination to produce ammonia and the pyruvoyl prosthetic group on the alpha chain. During this reaction, the Ser that is part of the protease active site of the proenzyme becomes the pyruvoyl prosthetic group, which constitutes an essential element of the active site of the mature decarboxylase. As to expression, highly expressed in flowers and at lower levels in leaves.

It is found in the vacuole membrane. The catalysed reaction is a 1,2-diacyl-sn-glycero-3-phospho-L-serine + H(+) = a 1,2-diacyl-sn-glycero-3-phosphoethanolamine + CO2. It participates in phospholipid metabolism; phosphatidylethanolamine biosynthesis; phosphatidylethanolamine from CDP-diacylglycerol: step 2/2. Catalyzes the formation of phosphatidylethanolamine (PtdEtn) from phosphatidylserine (PtdSer). Plays a central role in phospholipid metabolism and in the interorganelle trafficking of phosphatidylserine. Contributes only to a minor proportion of PtdEtn production. This chain is Phosphatidylserine decarboxylase proenzyme 2 (PSD2), found in Arabidopsis thaliana (Mouse-ear cress).